Reading from the N-terminus, the 136-residue chain is Keratin-associated protein 9-3 (136 aa).

Tandem repeats lie at residues 3–7 (CCATS), 21–25 (CCQPT), 31–35 (CCQPS), 36–40 (CCEAS), 41–45 (CCQPS), 46–50 (CCETG), 87–91 (CCVVS), 97–101 (CCQLH), 107–111 (CCRPS), 117–121 (CCRPA), and 126–130 (CCQPS). Positions 21 to 130 (CCQPTCTQSS…ACCCYCCQPS (110 aa)) are 11 X 5 AA repeats of C-C-[AEQVR]-[ALPTV]-[AGHST].

It belongs to the KRTAP type 9 family. Interacts with hair keratins.

Its function is as follows. In the hair cortex, hair keratin intermediate filaments are embedded in an interfilamentous matrix, consisting of hair keratin-associated proteins (KRTAP), which are essential for the formation of a rigid and resistant hair shaft through their extensive disulfide bond cross-linking with abundant cysteine residues of hair keratins. The matrix proteins include the high-sulfur and high-glycine-tyrosine keratins. The polypeptide is Keratin-associated protein 9-3 (Mus musculus (Mouse)).